Reading from the N-terminus, the 85-residue chain is Protein AC4 (85 aa).

Glycine 2 is lipidated: N-myristoyl glycine; by host. Residues 44 to 63 (RAPMSNPTSRKTGTVSNGDC) are disordered. The segment covering 46-62 (PMSNPTSRKTGTVSNGD) has biased composition (polar residues).

It belongs to the geminiviridae protein AC4/C4 family.

The protein resides in the host cell membrane. In terms of biological role, pathogenicity determinant. May act as a suppressor of RNA-mediated gene silencing, also known as post-transcriptional gene silencing (PTGS), a mechanism of plant viral defense that limits the accumulation of viral RNAs. The chain is Protein AC4 from Potato yellow mosaic virus (isolate Venezuela) (PYMV).